A 186-amino-acid polypeptide reads, in one-letter code: UPF0301 protein HI_0304 (186 aa).

It belongs to the UPF0301 (AlgH) family.

This chain is UPF0301 protein HI_0304, found in Haemophilus influenzae (strain ATCC 51907 / DSM 11121 / KW20 / Rd).